A 287-amino-acid polypeptide reads, in one-letter code: MKDNTCTKRDFLNGTKIGGDEPFFLISGPCVMENRDLLDRVCAEMIEVCGELKIPYIFKSSFDKANRSSVNSYRGPGLAEGIKNLEYIKNKYNVPVLTDIHETSQISPLKDVIDVYQIPAFLCRQTDLISQSAQTGKWVNVKKGQFLAPADTRHIAVKMNESGNNKLLVTERGTSFGYGNLIFDGRAIPIIHGFDIPLVFDATHSAQLPGAAGNSTGGQREFIPSILRSAVSFGIEGIFMEVHPDPPNALSDATTQYPLSQIKSLLKEMIGLDRYIKKEILISRSSL.

The protein belongs to the KdsA family.

The protein resides in the cytoplasm. It carries out the reaction D-arabinose 5-phosphate + phosphoenolpyruvate + H2O = 3-deoxy-alpha-D-manno-2-octulosonate-8-phosphate + phosphate. It functions in the pathway carbohydrate biosynthesis; 3-deoxy-D-manno-octulosonate biosynthesis; 3-deoxy-D-manno-octulosonate from D-ribulose 5-phosphate: step 2/3. The protein operates within bacterial outer membrane biogenesis; lipopolysaccharide biosynthesis. This Leptospira interrogans serogroup Icterohaemorrhagiae serovar copenhageni (strain Fiocruz L1-130) protein is 2-dehydro-3-deoxyphosphooctonate aldolase.